The chain runs to 196 residues: Interferon lambda-3 (196 aa).

The signal sequence occupies residues 1 to 21 (MTGDCMPVLVLMAAVLTVTGA). 3 disulfides stabilise this stretch: C37–C136, C71–C169, and C188–C195.

The protein belongs to the lambda interferon family.

Its subcellular location is the secreted. Cytokine with antiviral, antitumour and immunomodulatory activities. Plays a critical role in the antiviral host defense, predominantly in the epithelial tissues. Acts as a ligand for the heterodimeric class II cytokine receptor composed of IL10RB and IFNLR1, and receptor engagement leads to the activation of the JAK/STAT signaling pathway resulting in the expression of IFN-stimulated genes (ISG), which mediate the antiviral state. Has a restricted receptor distribution and therefore restricted targets: is primarily active in epithelial cells and this cell type-selective action is because of the epithelial cell-specific expression of its receptor IFNLR1. Seems not to be essential for early virus-activated host defense in vaginal infection, but plays an important role in Toll-like receptor (TLR)-induced antiviral defense. Plays a significant role in the antiviral immune defense in the intestinal epithelium. Exerts an immunomodulatory effect by up-regulating MHC class I antigen expression. The sequence is that of Interferon lambda-3 (IFNL3) from Homo sapiens (Human).